A 179-amino-acid polypeptide reads, in one-letter code: Large ribosomal subunit protein uL5 (179 aa).

The protein belongs to the universal ribosomal protein uL5 family. In terms of assembly, part of the 50S ribosomal subunit; contacts the 5S rRNA and probably tRNA. Forms a bridge to the 30S subunit in the 70S ribosome.

Its function is as follows. This is one of the proteins that bind and probably mediate the attachment of the 5S RNA into the large ribosomal subunit, where it forms part of the central protuberance. In the 70S ribosome it contacts protein S13 of the 30S subunit (bridge B1b), connecting the 2 subunits; this bridge is implicated in subunit movement. May contact the P site tRNA; the 5S rRNA and some of its associated proteins might help stabilize positioning of ribosome-bound tRNAs. In Pyrobaculum aerophilum (strain ATCC 51768 / DSM 7523 / JCM 9630 / CIP 104966 / NBRC 100827 / IM2), this protein is Large ribosomal subunit protein uL5.